The following is a 487-amino-acid chain: GTPase Der (487 aa).

EngA-type G domains lie at 5–169 (PKLA…SREI) and 178–351 (IKVA…ANSQ). GTP-binding positions include 11-18 (GRPNVGKS), 58-62 (DTGGI), 121-124 (NKID), 184-191 (GRANVGKS), 231-235 (DTAGI), and 296-299 (NKWD). Residues 352–439 (KRITTHQLNK…IHLKGKTKKD (88 aa)) form the KH-like domain. Residues 441-466 (PVSSLSLTRKQTKSTDQENNEYDELY) form a disordered region.

It belongs to the TRAFAC class TrmE-Era-EngA-EngB-Septin-like GTPase superfamily. EngA (Der) GTPase family. As to quaternary structure, associates with the 50S ribosomal subunit.

GTPase that plays an essential role in the late steps of ribosome biogenesis. In Protochlamydia amoebophila (strain UWE25), this protein is GTPase Der.